The chain runs to 228 residues: 2-C-methyl-D-erythritol 4-phosphate cytidylyltransferase (228 aa).

It belongs to the IspD/TarI cytidylyltransferase family. IspD subfamily.

The enzyme catalyses 2-C-methyl-D-erythritol 4-phosphate + CTP + H(+) = 4-CDP-2-C-methyl-D-erythritol + diphosphate. It participates in isoprenoid biosynthesis; isopentenyl diphosphate biosynthesis via DXP pathway; isopentenyl diphosphate from 1-deoxy-D-xylulose 5-phosphate: step 2/6. In terms of biological role, catalyzes the formation of 4-diphosphocytidyl-2-C-methyl-D-erythritol from CTP and 2-C-methyl-D-erythritol 4-phosphate (MEP). This Mannheimia succiniciproducens (strain KCTC 0769BP / MBEL55E) protein is 2-C-methyl-D-erythritol 4-phosphate cytidylyltransferase.